The sequence spans 520 residues: MPASELKASEIPFHPSIKTQDPKAEEKSPKKQKVTLTAAEALKLFKNQLSPYEQSEILGYAELWFLGLEAKKLDTAPEKFSKTSFDDEHGFYLKVLHDHIAYRYEVLETIGKGSFGQVAKCLDHKNNELVALKIIRNKKRFHQQALMELKILEALRKKDKDNTYNVVHMKDFFYFRNHFCITFELLGINLYELMKNNNFQGFSLSIVRRFTLSVLKCLQMLSVEKIIHCDLKPENIVLYQKGQASVKVIDFGSSCYEHQKVYTYIQSRFYRSPEVILGHPYDVAIDMWSLGCITAELYTGYPLFPGENEVEQLACIMEVLGLPPAGFIQTASRRQTFFDSKGFPKNITNNRGKKRYPDSKDLTMVLKTYDTSFLDFLRRCLVWEPSLRMTPDQALKHAWIHQSRNLKPQPRPQTLRKSNSFFPSETRKDKVQGCHHSSRKADEITKETTEKTKDSPTKHVQHSGDQQDCLQHGADTVQLPQLVDAPKKSEAAVGAEVSMTSPGQSKNFSLKNTNVLPPIV.

Positions 1-32 are disordered; the sequence is MPASELKASEIPFHPSIKTQDPKAEEKSPKKQ. The Bipartite nuclear localization signal signature appears at 19 to 37; the sequence is TQDPKAEEKSPKKQKVTLT. Over residues 20–29 the composition is skewed to basic and acidic residues; the sequence is QDPKAEEKSP. The 297-residue stretch at 104–400 folds into the Protein kinase domain; it reads YEVLETIGKG…PDQALKHAWI (297 aa). Residues 110-118, Lys133, and 183-186 each bind ATP; these read IGKGSFGQV and FELL. Asp230 acts as the Proton acceptor in catalysis. Tyr264 is subject to Phosphotyrosine; by autocatalysis. Residues 404 to 467 are disordered; that stretch reads RNLKPQPRPQ…KHVQHSGDQQ (64 aa). The segment covering 439–457 has biased composition (basic and acidic residues); sequence RKADEITKETTEKTKDSPT.

It belongs to the protein kinase superfamily. CMGC Ser/Thr protein kinase family. MNB/DYRK subfamily. The cofactor is Mg(2+). Post-translationally, autophosphorylation on Tyr-264 in the activation loop is required for kinase activity.

Its subcellular location is the cytoplasm. It localises to the nucleus. It carries out the reaction L-seryl-[protein] + ATP = O-phospho-L-seryl-[protein] + ADP + H(+). It catalyses the reaction L-threonyl-[protein] + ATP = O-phospho-L-threonyl-[protein] + ADP + H(+). The enzyme catalyses L-tyrosyl-[protein] + ATP = O-phospho-L-tyrosyl-[protein] + ADP + H(+). Its function is as follows. Possible non-essential role in spermiogenesis. This chain is Dual specificity tyrosine-phosphorylation-regulated kinase 4 (DYRK4), found in Homo sapiens (Human).